The sequence spans 128 residues: uncharacterized protein (128 aa).

Transmembrane regions (helical) follow at residues 13–35, 42–64, and 90–112; these read FQMA…VFFV, IIAL…YNGG, and LVLT…SIIL.

It localises to the cell membrane. This is an uncharacterized protein from Methanocaldococcus jannaschii (strain ATCC 43067 / DSM 2661 / JAL-1 / JCM 10045 / NBRC 100440) (Methanococcus jannaschii).